An 86-amino-acid chain; its full sequence is uncharacterized protein (86 aa).

TPR repeat units follow at residues 8–41 and 42–75; these read AEYY…NPFY and RDAW…EKHL.

This is an uncharacterized protein from Methanocaldococcus jannaschii (strain ATCC 43067 / DSM 2661 / JAL-1 / JCM 10045 / NBRC 100440) (Methanococcus jannaschii).